A 162-amino-acid chain; its full sequence is NADH-quinone oxidoreductase subunit I (162 aa).

4Fe-4S ferredoxin-type domains lie at 52–82 and 93–122; these read LRRY…IEAG and VRYD…EGPN. [4Fe-4S] cluster contacts are provided by Cys-62, Cys-65, Cys-68, Cys-72, Cys-102, Cys-105, Cys-108, and Cys-112.

It belongs to the complex I 23 kDa subunit family. In terms of assembly, NDH-1 is composed of 14 different subunits. Subunits NuoA, H, J, K, L, M, N constitute the membrane sector of the complex. Requires [4Fe-4S] cluster as cofactor.

It localises to the cell inner membrane. It catalyses the reaction a quinone + NADH + 5 H(+)(in) = a quinol + NAD(+) + 4 H(+)(out). NDH-1 shuttles electrons from NADH, via FMN and iron-sulfur (Fe-S) centers, to quinones in the respiratory chain. The immediate electron acceptor for the enzyme in this species is believed to be ubiquinone. Couples the redox reaction to proton translocation (for every two electrons transferred, four hydrogen ions are translocated across the cytoplasmic membrane), and thus conserves the redox energy in a proton gradient. This Nitrobacter winogradskyi (strain ATCC 25391 / DSM 10237 / CIP 104748 / NCIMB 11846 / Nb-255) protein is NADH-quinone oxidoreductase subunit I.